We begin with the raw amino-acid sequence, 437 residues long: MGSLKIYPSKLSGDVKIPPSKSMAHRAVICSSLSNGKSRISNIDFSDDIIATIRAMTSLGAIIEKKEDILEISGIFSKEGILNRENQLNQPKLTIDCNESGSTLRFLVPISLAFDGVKRFIGRGNLGKRPLDTYYEIFDRQNIKYSYKENQLDLIISGKLKPDEFRVKGNISSQFITGLLFILPTLESDSKIIITTELESKGYLDLTLSTIKDFGVEIINNNYKEFIIKGNQTYKARDYKVEGDYSQGAFYLSADAIGEDISILDLKEDSLQGDSEVVEILSRMGMEILREGNKIKGITNGLNGTLIDASQCPDIIPVLSVVASLSIGKTTIINAGRLRIKECDRLHAINVELSKLGANIEEKEDSLIIEGVSKLNGGVEVWSHKDHRIAMTLAIASCRCDKPIILKDFECVSKSYPHFFKDFKMLGGRIDEWNMGK.

Residues lysine 21, serine 22, and arginine 26 each coordinate 3-phosphoshikimate. Residue lysine 21 coordinates phosphoenolpyruvate. Phosphoenolpyruvate-binding residues include glycine 101 and arginine 129. Serine 172, serine 173, glutamine 174, serine 200, aspartate 314, and lysine 341 together coordinate 3-phosphoshikimate. Residue glutamine 174 participates in phosphoenolpyruvate binding. Residue aspartate 314 is the Proton acceptor of the active site. 3 residues coordinate phosphoenolpyruvate: arginine 345, arginine 388, and lysine 414.

The protein belongs to the EPSP synthase family. Monomer.

It is found in the cytoplasm. The catalysed reaction is 3-phosphoshikimate + phosphoenolpyruvate = 5-O-(1-carboxyvinyl)-3-phosphoshikimate + phosphate. It functions in the pathway metabolic intermediate biosynthesis; chorismate biosynthesis; chorismate from D-erythrose 4-phosphate and phosphoenolpyruvate: step 6/7. Functionally, catalyzes the transfer of the enolpyruvyl moiety of phosphoenolpyruvate (PEP) to the 5-hydroxyl of shikimate-3-phosphate (S3P) to produce enolpyruvyl shikimate-3-phosphate and inorganic phosphate. This chain is 3-phosphoshikimate 1-carboxyvinyltransferase, found in Clostridioides difficile (strain 630) (Peptoclostridium difficile).